Here is a 192-residue protein sequence, read N- to C-terminus: SRP-independent targeting protein 2 homolog (192 aa).

Helical transmembrane passes span 16 to 36 (ILTF…ILRF) and 102 to 122 (WILI…YLLV). The segment at 149–192 (LNQPPQQQQQQQQQQHQQHATPSEPVLSKRQQKLRKKAAKYSRP) is disordered. A compositionally biased stretch (low complexity) spans 151–167 (QPPQQQQQQQQQQHQQH). The segment covering 178–192 (RQQKLRKKAAKYSRP) has biased composition (basic residues).

It belongs to the TMEM208 family.

Its subcellular location is the endoplasmic reticulum membrane. In terms of biological role, may function in a SRP (signal recognition particle) and GET (guided entry of tail-anchored proteins) independent pathway for targeting a broad range of substrate proteins to the endoplasmic reticulum. Has a role in meiosis. The sequence is that of SRP-independent targeting protein 2 homolog from Schizosaccharomyces pombe (strain 972 / ATCC 24843) (Fission yeast).